Here is a 197-residue protein sequence, read N- to C-terminus: GTP cyclohydrolase-2 (197 aa).

50 to 54 serves as a coordination point for GTP; the sequence is RIHSE. Positions 55, 66, and 68 each coordinate Zn(2+). GTP is bound by residues glutamine 71, 93 to 95, and threonine 115; that span reads EGR. Residue aspartate 127 is the Proton acceptor of the active site. Arginine 129 acts as the Nucleophile in catalysis. GTP-binding residues include threonine 150 and lysine 155.

The protein belongs to the GTP cyclohydrolase II family. Zn(2+) serves as cofactor.

The catalysed reaction is GTP + 4 H2O = 2,5-diamino-6-hydroxy-4-(5-phosphoribosylamino)-pyrimidine + formate + 2 phosphate + 3 H(+). The protein operates within cofactor biosynthesis; riboflavin biosynthesis; 5-amino-6-(D-ribitylamino)uracil from GTP: step 1/4. Its function is as follows. Catalyzes the conversion of GTP to 2,5-diamino-6-ribosylamino-4(3H)-pyrimidinone 5'-phosphate (DARP), formate and pyrophosphate. The protein is GTP cyclohydrolase-2 of Aeromonas hydrophila subsp. hydrophila (strain ATCC 7966 / DSM 30187 / BCRC 13018 / CCUG 14551 / JCM 1027 / KCTC 2358 / NCIMB 9240 / NCTC 8049).